A 686-amino-acid chain; its full sequence is Chondroitin proteoglycan 1 (686 aa).

Residues 1–18 (MLPKSVLIVAFLVASSSA) form the signal peptide. Asn-46 is a glycosylation site (N-linked (GlcNAc...) asparagine). The region spanning 63-120 (DTDCSTKEDGLYAIGGCSPQFLTCSGGIARIMDCPANLIYDQRIIACEYSYNVPECSG) is the Chitin-binding type-2 1 domain. Cysteines 96 and 109 form a disulfide. Residue Asn-143 is glycosylated (N-linked (GlcNAc...) asparagine). The Chitin-binding type-2 2 domain maps to 228 to 285 (DKTCNGKADGFYSFGQCSDHYIACSNGYTIPMQCPARLSFDEARVICDYTMNVPECQN). Cys-261 and Cys-274 are disulfide-bonded. A disordered region spans residues 284–312 (QNGSGNYEGSAEETTTEASGELPYSNGYG). Asn-285, Asn-635, and Asn-664 each carry an N-linked (GlcNAc...) asparagine glycan. A disordered region spans residues 658–686 (KLRSATNRTSTKEATTRTQNMHAHYHRNH).

In terms of biological role, required for polar body extrusion during cytokinesis in embryo development. Affects cortical granule size. Shown to have roles in meiotic chromosome segregation, osmotic barrier function and polarization in conjunction with cpg-2. Binds chitin. This Caenorhabditis briggsae protein is Chondroitin proteoglycan 1 (cpg-1).